Reading from the N-terminus, the 220-residue chain is MAAATGTRKKKTPRPGQWKLWLLYTAGFVPAVWTFYLGATGQLGADPVKTFEHLLGLWALRFLILTLLVTPMRDLTGITLLRYRRALGLLAFYYALMHFTTYMVLDQGLNLSAIITDIVRRPFITIGMISLALLVPLALTSNNWSIRKLGRRWSSLHKLVYIAIAGSAVHFLMSVKSWPAEPVIYAAIVAALLLWRLARPYLRTRKPALRPRGEAIALRK.

The next 6 helical transmembrane spans lie at 20–40 (LWLL…LGAT), 51–71 (FEHL…LVTP), 86–106 (ALGL…MVLD), 122–142 (PFIT…LTSN), 153–173 (WSSL…HFLM), and 175–195 (VKSW…LLLW).

The protein belongs to the MsrQ family. In terms of assembly, heterodimer of a catalytic subunit (MsrP) and a heme-binding subunit (MsrQ). FMN serves as cofactor. Requires heme b as cofactor.

The protein localises to the cell inner membrane. Functionally, part of the MsrPQ system that repairs oxidized periplasmic proteins containing methionine sulfoxide residues (Met-O), using respiratory chain electrons. Thus protects these proteins from oxidative-stress damage caused by reactive species of oxygen and chlorine generated by the host defense mechanisms. MsrPQ is essential for the maintenance of envelope integrity under bleach stress, rescuing a wide series of structurally unrelated periplasmic proteins from methionine oxidation. MsrQ provides electrons for reduction to the reductase catalytic subunit MsrP, using the quinone pool of the respiratory chain. The chain is Protein-methionine-sulfoxide reductase heme-binding subunit MsrQ from Brucella melitensis biotype 2 (strain ATCC 23457).